Here is a 184-residue protein sequence, read N- to C-terminus: Ras-related protein O-Krev (184 aa).

Position 10–17 (10–17 (GSGGVGKS)) interacts with GTP. An Effector region motif is present at residues 32 to 40 (YDPTIEDSY). GTP is bound by residues 57–61 (DTAGT) and 116–119 (NKCD). Cysteine methyl ester is present on Cys181. A lipid anchor (S-geranylgeranyl cysteine) is attached at Cys181. Residues 182-184 (TLL) constitute a propeptide, removed in mature form.

This sequence belongs to the small GTPase superfamily. Ras family.

Its subcellular location is the cell membrane. The enzyme catalyses GTP + H2O = GDP + phosphate + H(+). This Diplobatis ommata (Ocellated electric ray) protein is Ras-related protein O-Krev.